The following is a 508-amino-acid chain: Photosystem II CP47 reaction center protein (508 aa).

Helical transmembrane passes span 21 to 36, 101 to 115, 140 to 156, 203 to 218, 237 to 252, and 457 to 472; these read SVHLMHTALVSGWAGS, IVLSGLLFLAAIWHW, GIHLFLSGVLCFGFGAF, IAAGILGILAGLFHLS, VLSSSIAAVFFAAFVV, and TFALIFFFGHIWHGAR.

The protein belongs to the PsbB/PsbC family. PsbB subfamily. PSII is composed of 1 copy each of membrane proteins PsbA, PsbB, PsbC, PsbD, PsbE, PsbF, PsbH, PsbI, PsbJ, PsbK, PsbL, PsbM, PsbT, PsbX, PsbY, PsbZ, Psb30/Ycf12, at least 3 peripheral proteins of the oxygen-evolving complex and a large number of cofactors. It forms dimeric complexes. Binds multiple chlorophylls. PSII binds additional chlorophylls, carotenoids and specific lipids. serves as cofactor.

The protein resides in the plastid. It localises to the chloroplast thylakoid membrane. One of the components of the core complex of photosystem II (PSII). It binds chlorophyll and helps catalyze the primary light-induced photochemical processes of PSII. PSII is a light-driven water:plastoquinone oxidoreductase, using light energy to abstract electrons from H(2)O, generating O(2) and a proton gradient subsequently used for ATP formation. The polypeptide is Photosystem II CP47 reaction center protein (Angiopteris evecta (Mule's foot fern)).